Here is a 196-residue protein sequence, read N- to C-terminus: Probable GTP-binding protein EngB (196 aa).

The EngB-type G domain maps to 24–196; it reads ELSEVALSGR…IWNLIEPYIS (173 aa). Residues 32-39, 59-63, 77-80, 144-147, and 176-178 each bind GTP; these read GRSNVGKS, GKTQT, DVPG, TKED, and YSS. The Mg(2+) site is built by Ser39 and Thr61.

It belongs to the TRAFAC class TrmE-Era-EngA-EngB-Septin-like GTPase superfamily. EngB GTPase family. Mg(2+) serves as cofactor.

Functionally, necessary for normal cell division and for the maintenance of normal septation. In Staphylococcus aureus (strain Mu3 / ATCC 700698), this protein is Probable GTP-binding protein EngB.